The primary structure comprises 1024 residues: Beta-galactosidase (1024 aa).

Residues Asn-100 and Asp-198 each contribute to the substrate site. Position 198 (Asp-198) interacts with Na(+). Mg(2+) is bound by residues Glu-414, His-416, and Glu-459. Substrate-binding positions include Glu-459 and Glu-535–His-538. Glu-459 serves as the catalytic Proton donor. Glu-535 functions as the Nucleophile in the catalytic mechanism. Asn-595 contributes to the Mg(2+) binding site. Residues Phe-599 and Asn-602 each contribute to the Na(+) site. Substrate is bound by residues Asn-602 and Trp-995.

It belongs to the glycosyl hydrolase 2 family. Homotetramer. It depends on Mg(2+) as a cofactor. Requires Na(+) as cofactor.

It carries out the reaction Hydrolysis of terminal non-reducing beta-D-galactose residues in beta-D-galactosides.. In Vibrio cholerae serotype O1 (strain ATCC 39541 / Classical Ogawa 395 / O395), this protein is Beta-galactosidase.